Here is a 1266-residue protein sequence, read N- to C-terminus: MIAHKQKKAKKKRVWASGQPSAAITTSEMGLKSVSSSSSFDPEYIKELVNDVRKFSHMLLYLKEAILSDCFKEVIHIRLDELLRVLKSILSKHQNLSSVDLQSAAEVLTAKVKAVNFTEVNEENKNDIFREVFSSIETLAFTFGNILTNFLMGDVGSDSILRLPISRESKSFENISVDSVDLPHEKGNFSPIELDNLLLKNTDSIELALSYAKTWSKYTKNIVSWVEKKLNLELESTRNIVKLAEATRSSIGIQEFMPLQSLFTNALLSDIHSSHLLQQTIAALQANKFVQPLLGRKNEMEKQRKEIKDLWKQQQNKLLETETALKKAKLLCMQRQDEYEKAKSSMFRAEEEQLSSSVGLAKNLNKQLEKRRRLEEEALQKVEEANEHYKVCVTNVEERRNDLENTKREILTQLRTLVFQCDLTLKAVTVNLFHMQQLQAASLANSLQSLCDSAKLYDPGQEYSEFVKATSSSELEEKVDGNVNKQMTNSPQTSGYEPADSLEDVARLPDSCHKLEEDRCSNSADMTGPSFVRSWKFGMFSDSESTGGSSESRSLDSESISPGDFHRKLPRTPSSGTMSSADDLDEREPPSPSEAGPNSLGAFKKTLMSKAALTHKFRKLRSPTKCRDCDGIVMFPGVECEECLLVCHRKCLENLVIICGHQKLQGKMHIFGAEFIQVAKKEPDGIPFVLKICASEIENRALCLQGIYRVCGNKIKTEKLCQALENGMHLVDISEFSSHDICDVLKLYLRQLPEPFILFRLYKEFIDLAKEIQHVNEEQEAKKDSPEDKKHPHVSIEVNRILLKSKDLLRQLPASHFNSLHYLIAHLRRVVDHAEENKMNSKNLGVIFGPTLIRPRPTTAPVTISSLAEYSNQARLVEFLITYSQKIFDGSLQPQAVVISNTGAVAPQVDQGYLPKPLLSPDERDTDHSMKPLFFSSKEDIRSSDCESKSFELTTSFEESERRQNALGKCDAPLLDNKVHLLFDQEHESASQKMEDVCKSPKLLLLKSNRAANSVQRHTPRTKMRPVSLPVDRLLLLASSPTERSSRDVGNVDSDKFGKNPAFEGLHRKDNSNTTRSKVNGFDQQNVQKSWDTQYVRNNFTAKTTMIVPSAYPEKGLTVNTGNNRDHPGSKAHAEPARAAGDVSERRSSDSCPATAVRAPRTLQPQHWTTFYKPPNPTFSVRGTEEKTALPSIAVPPVLVHAPQIHVTKSDPDSEATLACPVQTSGQPKESSEEPALPEGTPTCQRPRLKRMQQFEDLEDEIPQFV.

Ser171, Ser176, Ser179, and Ser190 each carry phosphoserine. The F-BAR domain occupies 192–462; it reads IELDNLLLKN…SAKLYDPGQE (271 aa). Residues 296–418 are a coiled coil; it reads RKNEMEKQRK…EILTQLRTLV (123 aa). The interval 482–501 is disordered; it reads NVNKQMTNSPQTSGYEPADS. Residues 483-495 are compositionally biased toward polar residues; it reads VNKQMTNSPQTSG. A phosphoserine mark is found at Ser501, Ser521, and Ser554. Over residues 542 to 561 the composition is skewed to low complexity; the sequence is DSESTGGSSESRSLDSESIS. The disordered stretch occupies residues 542–601; the sequence is DSESTGGSSESRSLDSESISPGDFHRKLPRTPSSGTMSSADDLDEREPPSPSEAGPNSLG. A Phorbol-ester/DAG-type zinc finger spans residues 614–659; sequence THKFRKLRSPTKCRDCDGIVMFPGVECEECLLVCHRKCLENLVIIC. The Rho-GAP domain maps to 673 to 888; the sequence is AEFIQVAKKE…FLITYSQKIF (216 aa). Residues Ser920, Ser956, and Ser1028 each carry the phosphoserine modification. 3 disordered regions span residues 1039–1081, 1116–1157, and 1209–1266; these read SSPT…KVNG, GLTV…ATAV, and KSDP…PQFV. The segment covering 1072–1081 has biased composition (polar residues); sequence SNTTRSKVNG. Basic and acidic residues predominate over residues 1124–1136; it reads NRDHPGSKAHAEP. A phosphoserine mark is found at Ser1149 and Ser1151. Positions 1256–1266 are enriched in acidic residues; that stretch reads EDLEDEIPQFV. The tract at residues 1263–1266 is interaction with PTPN13/PTPL1; it reads PQFV.

In terms of assembly, interacts with PTPN13/PTPL1. Interacts with RAP2A via its coiled coil domain. Interacts with RASIP1.

In terms of biological role, GTPase activator for the Rho-type GTPases by converting them to an inactive GDP-bound state. Has strong activity toward RHOA, and weaker activity toward RAC1 and CDC42. May act as a specific effector of RAP2A to regulate Rho. In concert with RASIP1, suppresses RhoA signaling and dampens ROCK and MYH9 activities in endothelial cells and plays an essential role in blood vessel tubulogenesis. In Mus musculus (Mouse), this protein is Rho GTPase-activating protein 29 (Arhgap29).